Reading from the N-terminus, the 125-residue chain is Succinate dehydrogenase cytochrome b560 subunit (125 aa).

Transmembrane regions (helical) follow at residues 29-49 (ISGV…KLAT), 68-88 (ILPW…INGI), and 104-124 (IIKD…FKFI). His-83 is a heme binding site.

Belongs to the cytochrome b560 family. As to quaternary structure, forms part of complex II containing four subunits: a 70 kDa flavoprotein (FP), a 27 kDa iron-sulfur protein (IP), a cytochrome B and a membrane-anchoring protein. It depends on heme as a cofactor.

It is found in the mitochondrion inner membrane. It participates in carbohydrate metabolism; tricarboxylic acid cycle. Its function is as follows. Membrane-anchoring subunit of succinate dehydrogenase (SDH) that is involved in complex II of the mitochondrial electron transport chain and is responsible for transferring electrons from succinate to ubiquinone (coenzyme Q). This chain is Succinate dehydrogenase cytochrome b560 subunit (SDH3), found in Porphyra purpurea (Red seaweed).